The primary structure comprises 152 residues: Large ribosomal subunit protein bL9 (152 aa).

This sequence belongs to the bacterial ribosomal protein bL9 family.

Binds to the 23S rRNA. The protein is Large ribosomal subunit protein bL9 of Corynebacterium urealyticum (strain ATCC 43042 / DSM 7109).